Here is a 333-residue protein sequence, read N- to C-terminus: Ketol-acid reductoisomerase (NADP(+)) (333 aa).

The KARI N-terminal Rossmann domain maps to 1-171; that stretch reads MSNDTQPKIA…GGARANIIKT (171 aa). NADP(+)-binding positions include 14 to 17, R37, T42, and 72 to 75; these read YGSQ and DMVQ. Residue H97 is part of the active site. NADP(+) is bound at residue G123. A KARI C-terminal knotted domain is found at 172–317; that stretch reads TFKEETETDL…KKLRAKMVWL (146 aa). Positions 180, 184, 216, and 220 each coordinate Mg(2+). S241 serves as a coordination point for substrate.

This sequence belongs to the ketol-acid reductoisomerase family. The cofactor is Mg(2+).

The enzyme catalyses (2R)-2,3-dihydroxy-3-methylbutanoate + NADP(+) = (2S)-2-acetolactate + NADPH + H(+). It catalyses the reaction (2R,3R)-2,3-dihydroxy-3-methylpentanoate + NADP(+) = (S)-2-ethyl-2-hydroxy-3-oxobutanoate + NADPH + H(+). Its pathway is amino-acid biosynthesis; L-isoleucine biosynthesis; L-isoleucine from 2-oxobutanoate: step 2/4. It functions in the pathway amino-acid biosynthesis; L-valine biosynthesis; L-valine from pyruvate: step 2/4. Involved in the biosynthesis of branched-chain amino acids (BCAA). Catalyzes an alkyl-migration followed by a ketol-acid reduction of (S)-2-acetolactate (S2AL) to yield (R)-2,3-dihydroxy-isovalerate. In the isomerase reaction, S2AL is rearranged via a Mg-dependent methyl migration to produce 3-hydroxy-3-methyl-2-ketobutyrate (HMKB). In the reductase reaction, this 2-ketoacid undergoes a metal-dependent reduction by NADPH to yield (R)-2,3-dihydroxy-isovalerate. This is Ketol-acid reductoisomerase (NADP(+)) from Xanthomonas oryzae pv. oryzae (strain MAFF 311018).